The primary structure comprises 523 residues: MEDRNAMDMSRIKYRPQPLRPASMVQPRVLLFPFPALGHVKPFLSLAELLSDAGIDVVFLSTEYNHRRISNTEALASRFPTLHFETIPDGLPPNESRALADGPLYFSMREGTKPRFRQLIQSLNDGRWPITCIITDIMLSSPIEVAEEFGIPVIAFCPCSARYLSIHFFIPKLVEEGQIPYADDDPIGEIQGVPLFEGLLRRNHLPGSWSDKSADISFSHGLINQTLAAGRASALILNTFDELEAPFLTHLSSIFNKIYTIGPLHALSKSRLGDSSSSASALSGFWKEDRACMSWLDCQPPRSVVFVSFGSTMKMKADELREFWYGLVSSGKPFLCVLRSDVVSGGEAAELIEQMAEEEGAGGKLGMVVEWAAQEKVLSHPAVGGFLTHCGWNSTVESIAAGVPMMCWPILGDQPSNATWIDRVWKIGVERNNREWDRLTVEKMVRALMEGQKRVEIQRSMEKLSKLANEKVVRGINLHPTISLKKDTPTTSEHPRHEFENMRGMNYEMLVGNAIKSPTLTKK.

Catalysis depends on His39, which acts as the Proton acceptor. Asp136 (charge relay) is an active-site residue. 8 residues coordinate UDP-alpha-D-glucose: Ser311, Gln374, Trp392, Asn393, Ser394, Glu397, Asp413, and Gln414.

It belongs to the UDP-glycosyltransferase family. In terms of tissue distribution, highly expressed in young fruits 15 and 34 days after anthesis (15-DAA and 34-DAA).

The catalysed reaction is mogrol + UDP-alpha-D-glucose = mogroside I-A1 + UDP + H(+). It carries out the reaction mogroside I-A1 + UDP-alpha-D-glucose = mogroside IIE + UDP + H(+). It catalyses the reaction mogroside IE + UDP-alpha-D-glucose = mogroside IIE + UDP + H(+). The enzyme catalyses mogroside II-A1 + UDP-alpha-D-glucose = mogroside IIIX + UDP + H(+). The catalysed reaction is mogroside II-A + UDP-alpha-D-glucose = mogroside III + UDP + H(+). It carries out the reaction mogroside IIE + UDP-alpha-D-glucose = mogroside III-C3(1-&gt;6) + UDP + H(+). It catalyses the reaction mogroside III + UDP-alpha-D-glucose = isomogroside IV + UDP + H(+). The enzyme catalyses mogroside III + UDP-alpha-D-glucose = mogroside IV + UDP + H(+). The catalysed reaction is mogroside IIIX + UDP-alpha-D-glucose = mogroside IVA + UDP + H(+). It carries out the reaction siamenoside I + UDP-alpha-D-glucose = isomogroside V + UDP + H(+). The protein operates within secondary metabolite biosynthesis; terpenoid biosynthesis. In terms of biological role, UDP-glycosyltransferase involved in the biosynthesis of cucurbitacin and mogroside tetracyclic triterpene natural products (e.g. siamenoside I and mogrosides IV, V and VI). Cucurbitacins have cytotoxic properties and exhibit deterrent taste as a defense barrier against herbivores. Mogrosides are nonsugar highly oxygenated compounds used as high-intensity zero-calorie sweeteners; they also possess pharmacological properties such as regulating immunity, lowering blood sugar and lipid levels, protecting the liver, and acting as antioxidants and antitumor agents. Catalyzes the C24 primary glucosylation of mogrol and mogroside I-E1, and the C3 primary glucosylation of mogroside I-A1, mogroside II-A1 and mogroside II-A. Also supports branching glucosylations of mogroside II-E, mogroside III, mogroside IIIx and siamenoside I. The sequence is that of Mogroside I-A1 synthase from Siraitia grosvenorii (Monk's fruit).